Consider the following 307-residue polypeptide: Homoserine kinase (307 aa).

Pro-95–Ser-105 provides a ligand contact to ATP.

Belongs to the GHMP kinase family. Homoserine kinase subfamily.

The protein resides in the cytoplasm. The enzyme catalyses L-homoserine + ATP = O-phospho-L-homoserine + ADP + H(+). Its pathway is amino-acid biosynthesis; L-threonine biosynthesis; L-threonine from L-aspartate: step 4/5. In terms of biological role, catalyzes the ATP-dependent phosphorylation of L-homoserine to L-homoserine phosphate. In Corynebacterium aurimucosum (strain ATCC 700975 / DSM 44827 / CIP 107346 / CN-1) (Corynebacterium nigricans), this protein is Homoserine kinase.